The sequence spans 268 residues: Thymidylate synthase (268 aa).

DUMP is bound by residues arginine 26 and 131-132 (RR). Cysteine 151 acts as the Nucleophile in catalysis. DUMP is bound by residues 171 to 174 (RSAD), asparagine 182, and 212 to 214 (HIY). Aspartate 174 serves as a coordination point for (6R)-5,10-methylene-5,6,7,8-tetrahydrofolate. Residue serine 267 coordinates (6R)-5,10-methylene-5,6,7,8-tetrahydrofolate.

Belongs to the thymidylate synthase family. Bacterial-type ThyA subfamily. As to quaternary structure, homodimer.

The protein resides in the cytoplasm. It carries out the reaction dUMP + (6R)-5,10-methylene-5,6,7,8-tetrahydrofolate = 7,8-dihydrofolate + dTMP. The protein operates within pyrimidine metabolism; dTTP biosynthesis. In terms of biological role, catalyzes the reductive methylation of 2'-deoxyuridine-5'-monophosphate (dUMP) to 2'-deoxythymidine-5'-monophosphate (dTMP) while utilizing 5,10-methylenetetrahydrofolate (mTHF) as the methyl donor and reductant in the reaction, yielding dihydrofolate (DHF) as a by-product. This enzymatic reaction provides an intracellular de novo source of dTMP, an essential precursor for DNA biosynthesis. This Corynebacterium aurimucosum (strain ATCC 700975 / DSM 44827 / CIP 107346 / CN-1) (Corynebacterium nigricans) protein is Thymidylate synthase.